We begin with the raw amino-acid sequence, 111 residues long: Glucosamine 6-phosphate N-acetyltransferase (111 aa).

Positions 1–111 (MKKDFHSTYY…MKKYASHSII (111 aa)) constitute an N-acetyltransferase domain. Substrate is bound by residues 33–36 (KFLR) and 45–47 (EEV). Acetyl-CoA-binding positions include 47 to 49 (VIV) and 55 to 60 (RKAIGK). Residues 76-77 (YK) and D81 contribute to the substrate site. 90–92 (YEK) provides a ligand contact to acetyl-CoA.

Belongs to the acetyltransferase family. GNA1 subfamily.

It catalyses the reaction D-glucosamine 6-phosphate + acetyl-CoA = N-acetyl-D-glucosamine 6-phosphate + CoA + H(+). Its pathway is nucleotide-sugar biosynthesis; UDP-N-acetyl-alpha-D-glucosamine biosynthesis; N-acetyl-alpha-D-glucosamine 1-phosphate from alpha-D-glucosamine 6-phosphate (route I): step 1/2. The sequence is that of Glucosamine 6-phosphate N-acetyltransferase (gna1) from Schizosaccharomyces pombe (strain 972 / ATCC 24843) (Fission yeast).